A 396-amino-acid chain; its full sequence is Pinosylvin synthase 1 (396 aa).

60–63 is a substrate binding site; that stretch reads KFKR. Residue Cys-170 is part of the active site. Substrate contacts are provided by residues Leu-273 and 311–313; that span reads GGH.

It belongs to the thiolase-like superfamily. Chalcone/stilbene synthases family. Homodimer.

It is found in the cytoplasm. The catalysed reaction is (E)-cinnamoyl-CoA + 3 malonyl-CoA + 3 H(+) = (E)-pinosylvin + 4 CO2 + 4 CoA. The enzyme catalyses 3-phenylpropanoyl-CoA + 3 malonyl-CoA + 3 H(+) = dihydropinosylvin + 4 CO2 + 4 CoA. The protein operates within phytoalexin biosynthesis; pinosylvin biosynthesis. Catalyzes the production of pinosylvin from cinnamoyl-CoA and malonyl-CoA, and dihydropinosylvin from dihydrocinnamoyl-CoA. This chain is Pinosylvin synthase 1, found in Pinus strobus (Eastern white pine).